Consider the following 199-residue polypeptide: Large ribosomal subunit protein bL17 (199 aa).

The interval 123–199 (DEANRARRAA…EESEAKDDTK (77 aa)) is disordered. The segment covering 137–152 (KADERADEKADEKAEE) has biased composition (basic and acidic residues). A compositionally biased stretch (acidic residues) spans 153–199 (TVEETTEAPAEESTEAAAEETVEETTEAPAEESTEAAEESEAKDDTK).

It belongs to the bacterial ribosomal protein bL17 family. Part of the 50S ribosomal subunit. Contacts protein L32.

The polypeptide is Large ribosomal subunit protein bL17 (Mycolicibacterium smegmatis (strain ATCC 700084 / mc(2)155) (Mycobacterium smegmatis)).